Consider the following 458-residue polypeptide: Probable plasmid replicative DNA helicase (458 aa).

Residues 194–458 (KIDYVDGLPT…GKFTIQKEAW (265 aa)) form the SF4 helicase domain. 225-232 (ARPAMGKT) is a binding site for ATP.

This sequence belongs to the helicase family. DnaB subfamily. In terms of assembly, homohexamer.

It catalyses the reaction Couples ATP hydrolysis with the unwinding of duplex DNA at the replication fork by translocating in the 5'-3' direction. This creates two antiparallel DNA single strands (ssDNA). The leading ssDNA polymer is the template for DNA polymerase III holoenzyme which synthesizes a continuous strand.. The catalysed reaction is ATP + H2O = ADP + phosphate + H(+). Functionally, a replicative DNA helicase, it participates in initiation and elongation during DNA replication. Travels ahead of the DNA replisome, separating dsDNA into templates for DNA synthesis. A processive ATP-dependent 5'-3' DNA helicase it has DNA-dependent ATPase activity. The polypeptide is Probable plasmid replicative DNA helicase (Chlamydia psittaci (Chlamydophila psittaci)).